Reading from the N-terminus, the 144-residue chain is HTH-type transcriptional regulator MntR (144 aa).

The HTH dtxR-type domain maps to 1–63 (MTTPSMEDYI…YEKYRGLILT (63 aa)). Residues Asp8, Glu11, His77, Glu99, Glu102, and His103 each coordinate Mn(2+).

It belongs to the DtxR/MntR family. As to quaternary structure, homodimer.

The protein localises to the cytoplasm. Its activity is regulated as follows. DNA binding is strongly activated by Mn(2+). Functionally, central regulator of manganese homeostasis. This is HTH-type transcriptional regulator MntR from Bacillus pumilus (strain SAFR-032).